The sequence spans 435 residues: Probable aminotransferase gliI (435 aa).

Position 266 is an N6-(pyridoxal phosphate)lysine (Lys266).

This sequence belongs to the class-I pyridoxal-phosphate-dependent aminotransferase family. Pyridoxal 5'-phosphate is required as a cofactor.

The protein operates within mycotoxin biosynthesis. Probable aminotransferase; part of the gene cluster that mediates the biosynthesis of gliotoxin, a member of the epipolythiodioxopiperazine (ETP) class of toxins characterized by a disulfide bridged cyclic dipeptide. The first step in gliotoxin biosynthesis is the condensation of serine and phenylalanine to form the cyclo-L-phenylalanyl-L-serine diketopiperazine (DKP) by the NRPS gliP. GliP is also able to produce the DKP cyclo-L-tryptophanyl-L-serine, suggesting that the substrate specificity of the first adenylation (A) domain in gliP is sufficiently relaxed to accommodate both L-Phe and L-Trp. The cytochrome P450 monooxygenase gliC has been shown to catalyze the subsequent hydroxylation of the alpha-carbon of L-Phe in cyclo-L-phenylalanyl-L-serine whereas the second cytochrome P450 enzyme, gliF, is presumably involved in the modification of the DKP side chain. The glutathione S-transferase (GST) gliG then forms a bis-glutathionylated biosynthetic intermediate which is responsible for the sulfurization of gliotoxin. This bis-glutathionylated intermediate is subsequently processed by the gamma-glutamyl cyclotransferase gliK to remove both gamma-glutamyl moieties. Subsequent processing via gliI yields a biosynthetic intermediate, which is N-methylated via the N-methyltransferase gliN, before the gliotoxin oxidoreductase gliT-mediated disulfide bridge closure. GliN-mediated amide methylation confers stability to ETP, damping the spontaneous formation of tri- and tetrasulfides. Intracellular dithiol gliotoxin oxidized by gliT is subsequently effluxed by gliA. Gliotoxin contributes to pathogenesis during invasive aspergillosis. In macrophages and neutrophils, gliotoxin showed inhibition of various different cell functions including cytokine production, antigen presentation, phagocytosis, and production of reactive oxygen species. This is Probable aminotransferase gliI from Aspergillus fumigatus (strain ATCC MYA-4609 / CBS 101355 / FGSC A1100 / Af293) (Neosartorya fumigata).